Reading from the N-terminus, the 1480-residue chain is Cystic fibrosis transmembrane conductance regulator (1480 aa).

At 1–77 the chain is on the cytoplasmic side; it reads MQRSPLEKAS…KLINALRRCF (77 aa). Residues 78–98 traverse the membrane as a helical segment; the sequence is FWRFMFYGIFLYLGEVTKAVQ. An ABC transmembrane type-1 1 domain is found at 81–365; that stretch reads FMFYGIFLYL…WAVQTWYDSL (285 aa). At 99-122 the chain is on the extracellular side; sequence PLLLGRIIASYDPDNKEERSIAIY. The helical transmembrane segment at 123–146 threads the bilayer; that stretch reads LGIGLCLLFIVRTLLLHPAIFGLH. The Cytoplasmic portion of the chain corresponds to 147–195; that stretch reads HIGMQMRIAMFSLIYKKTLKLSSRVLDKISIGQLVSLLSNNLNKFDEGL. A helical transmembrane segment spans residues 196-216; sequence ALAHFVWIAPLQVALLMGLIW. Over 217 to 222 the chain is Extracellular; it reads ELLQAS. The chain crosses the membrane as a helical span at residues 223 to 243; sequence AFCGLGFLIVLALFQAGLGRM. Residues 244 to 298 are Cytoplasmic-facing; the sequence is MMKYRDQRAGKISERLVITSEMIENIQSVKAYCWEEAMEKMIENLRQTELKLTRK. The helical transmembrane segment at 299–319 threads the bilayer; that stretch reads AAYVRYFNSSAFFFSGFFVVF. Residues 320–339 lie on the Extracellular side of the membrane; the sequence is LSVLPYALIKGIILRKIFTT. A helical transmembrane segment spans residues 340–358; the sequence is ISFCIVLRMAVTRQFPWAV. Over 359-858 the chain is Cytoplasmic; sequence QTWYDSLGAI…YLRYITVHKS (500 aa). ATP contacts are provided by residues Trp401, Ser434, 458–465, and Gln493; that span reads GSTGAGKT. One can recognise an ABC transporter 1 domain in the interval 423–646; it reads NGDDSLFFSN…QPDFSSKLMG (224 aa). The S-palmitoyl cysteine moiety is linked to residue Cys524. Ser549 carries the phosphoserine modification. Positions 654–831 are disordered R region; that stretch reads SAERRNSILT…EEINEEDLKE (178 aa). Phosphoserine; by PKA occurs at positions 660 and 670. Phosphoserine; by PKC is present on Ser686. Lys688 participates in a covalent cross-link: Glycyl lysine isopeptide (Lys-Gly) (interchain with G-Cter in ubiquitin). Phosphoserine; by PKA occurs at positions 700 and 712. The residue at position 717 (Thr717) is a Phosphothreonine. 3 positions are modified to phosphoserine; by PKA: Ser737, Ser753, and Ser768. Residue Ser790 is modified to Phosphoserine; by PKC. 2 positions are modified to phosphoserine; by PKA: Ser795 and Ser813. A helical transmembrane segment spans residues 859-879; it reads LIFVLIWCLVIFLAEVAASLV. The ABC transmembrane type-1 2 domain maps to 859–1155; it reads LIFVLIWCLV…AVNSSIDVDS (297 aa). Topologically, residues 880–918 are extracellular; it reads VLWLLGNTPLQDKGNSTHSRNNSYAVIITSTSSYYVFYI. N-linked (GlcNAc...) asparagine glycosylation is found at Asn894 and Asn900. A discontinuously helical transmembrane segment spans residues 919–939; sequence YVGVADTLLAMGFFRGLPLVH. Topologically, residues 940-990 are cytoplasmic; that stretch reads TLITVSKILHHKMLHSVLQAPMSTLNTLKAGGILNRFSKDIAILDDLLPLT. A helical membrane pass occupies residues 991-1011; the sequence is IFDFIQLLLIVIGAIAVVAVL. Over 1012-1013 the chain is Extracellular; it reads QP. The chain crosses the membrane as a helical span at residues 1014–1034; that stretch reads YIFVATVPVIVAFIMLRAYFL. Residues 1035 to 1095 lie on the Cytoplasmic side of the membrane; it reads QTSQQLKQLE…TANWFLYLST (61 aa). The chain crosses the membrane as a helical span at residues 1096–1116; the sequence is LRWFQMRIEMIFVIFFIAVTF. Over 1117–1130 the chain is Extracellular; the sequence is ISILTTGEGEGRVG. Residues 1131 to 1151 form a helical membrane-spanning segment; sequence IILTLAMNIMSTLQWAVNSSI. Residues 1152-1480 lie on the Cytoplasmic side of the membrane; it reads DVDSLMRSVS…TEEEVQDTRL (329 aa). Positions 1210–1443 constitute an ABC transporter 2 domain; the sequence is MTVKDLTAKY…RSLFRQAISP (234 aa). ATP-binding positions include Tyr1219 and 1244–1251; that span reads GRTGSGKS. An interaction with GORASP2 region spans residues 1386 to 1480; it reads RTLKQAFADC…TEEEVQDTRL (95 aa). A lipid anchor (S-palmitoyl cysteine) is attached at Cys1395. Phosphoserine occurs at positions 1444 and 1456. A disordered region spans residues 1452–1480; sequence HRNSSKCKSKPQIAALKEETEEEVQDTRL. The segment covering 1470–1480 has biased composition (acidic residues); the sequence is ETEEEVQDTRL. The short motif at 1478–1480 is the PDZ-binding element; the sequence is TRL.

The protein belongs to the ABC transporter superfamily. ABCC family. CFTR transporter (TC 3.A.1.202) subfamily. In terms of assembly, monomer; does not require oligomerization for channel activity. May form oligomers in the membrane. Interacts with SLC26A3, SLC26A6 and SHANK2. Interacts with NHERF1 and MYO6. Interacts (via C-terminus) with GOPC (via PDZ domain); this promotes CFTR internalization and thereby decreases channel activity. Interacts with SLC4A7 through NHERF1. Found in a complex with MYO5B and RAB11A. Interacts with ANO1. Interacts with SLC26A8. Interacts with AHCYL1; the interaction increases CFTR activity. Interacts with CSE1L. The core-glycosylated form interacts with GORASP2 (via PDZ GRASP-type 1 domain) in respone to ER stress. Interacts with MARCHF2; the interaction leads to CFTR ubiqtuitination and degradation. Interacts with ADGRG2. In terms of processing, N-glycosylated. Phosphorylated; cAMP treatment promotes phosphorylation and activates the channel. Dephosphorylation decreases the ATPase activity (in vitro). Phosphorylation at PKA sites activates the channel. Phosphorylation at PKC sites enhances the response to phosphorylation by PKA. Phosphorylated by AMPK; this inhibits channel activity. Post-translationally, ubiquitinated, leading to its degradation in the lysosome. Deubiquitination by USP10 in early endosomes enhances its endocytic recycling to the cell membrane. Ubiquitinated by RNF185 during ER stress. Ubiquitinated by MARCHF2. In terms of tissue distribution, expressed in the respiratory airway, including bronchial epithelium, and in the female reproductive tract, including oviduct (at protein level). Detected in pancreatic intercalated ducts in the exocrine tissue, on epithelial cells in intralobular striated ducts in sublingual salivary glands, on apical membranes of crypt cells throughout the small and large intestine, and on the reabsorptive duct in eccrine sweat glands. Detected on the equatorial segment of the sperm head (at protein level). Detected in nasal and bronchial superficial epithelium. Expressed by the central cells on the sebaceous glands, dermal adipocytes and, at lower levels, by epithelial cells.

The protein localises to the apical cell membrane. It localises to the early endosome membrane. The protein resides in the cell membrane. Its subcellular location is the recycling endosome membrane. It is found in the endoplasmic reticulum membrane. The protein localises to the nucleus. It carries out the reaction ATP + H2O + closed Cl(-) channel = ADP + phosphate + open Cl(-) channel.. The catalysed reaction is chloride(in) = chloride(out). It catalyses the reaction hydrogencarbonate(in) = hydrogencarbonate(out). The enzyme catalyses ATP + H2O = ADP + phosphate + H(+). Its function is as follows. Epithelial ion channel that plays an important role in the regulation of epithelial ion and water transport and fluid homeostasis. Mediates the transport of chloride ions across the cell membrane. Possesses an intrinsic ATPase activity and utilizes ATP to gate its channel; the passive flow of anions through the channel is gated by cycles of ATP binding and hydrolysis by the ATP-binding domains. The ion channel is also permeable to HCO(3)(-); selectivity depends on the extracellular chloride concentration. In vitro, mediates ATP-dependent glutathione flux. Exerts its function also by modulating the activity of other ion channels and transporters. Plays an important role in airway fluid homeostasis. Contributes to the regulation of the pH and the ion content of the airway surface fluid layer and thereby plays an important role in defense against pathogens. Modulates the activity of the epithelial sodium channel (ENaC) complex, in part by regulating the cell surface expression of the ENaC complex. Inhibits the activity of the ENaC channel containing subunits SCNN1A, SCNN1B and SCNN1G. Inhibits the activity of the ENaC channel containing subunits SCNN1D, SCNN1B and SCNN1G, but not of the ENaC channel containing subunits SCNN1A, SCNN1B and SCNN1G. May regulate bicarbonate secretion and salvage in epithelial cells by regulating the transporter SLC4A7. Can inhibit the chloride channel activity of ANO1. Plays a role in the chloride and bicarbonate homeostasis during sperm epididymal maturation and capacitation. This Homo sapiens (Human) protein is Cystic fibrosis transmembrane conductance regulator.